Consider the following 444-residue polypeptide: Glutamyl-tRNA reductase (444 aa).

Residues 49–52 (TCNR), Ser109, 114–116 (ETQ), and Gln120 contribute to the substrate site. The active-site Nucleophile is Cys50. 189-194 (GAGKMG) provides a ligand contact to NADP(+).

Belongs to the glutamyl-tRNA reductase family. In terms of assembly, homodimer.

The catalysed reaction is (S)-4-amino-5-oxopentanoate + tRNA(Glu) + NADP(+) = L-glutamyl-tRNA(Glu) + NADPH + H(+). It participates in porphyrin-containing compound metabolism; protoporphyrin-IX biosynthesis; 5-aminolevulinate from L-glutamyl-tRNA(Glu): step 1/2. Catalyzes the NADPH-dependent reduction of glutamyl-tRNA(Glu) to glutamate 1-semialdehyde (GSA). The protein is Glutamyl-tRNA reductase of Bacillus cereus (strain 03BB102).